Here is a 253-residue protein sequence, read N- to C-terminus: Tryptophan synthase alpha chain (253 aa).

Catalysis depends on proton acceptor residues Glu46 and Asp57.

It belongs to the TrpA family. In terms of assembly, tetramer of two alpha and two beta chains.

It catalyses the reaction (1S,2R)-1-C-(indol-3-yl)glycerol 3-phosphate + L-serine = D-glyceraldehyde 3-phosphate + L-tryptophan + H2O. It participates in amino-acid biosynthesis; L-tryptophan biosynthesis; L-tryptophan from chorismate: step 5/5. Its function is as follows. The alpha subunit is responsible for the aldol cleavage of indoleglycerol phosphate to indole and glyceraldehyde 3-phosphate. The chain is Tryptophan synthase alpha chain from Dictyoglomus thermophilum (strain ATCC 35947 / DSM 3960 / H-6-12).